We begin with the raw amino-acid sequence, 472 residues long: Argininosuccinate lyase (472 aa).

Belongs to the lyase 1 family. Argininosuccinate lyase subfamily.

The protein resides in the cytoplasm. It carries out the reaction 2-(N(omega)-L-arginino)succinate = fumarate + L-arginine. It participates in amino-acid biosynthesis; L-arginine biosynthesis; L-arginine from L-ornithine and carbamoyl phosphate: step 3/3. The sequence is that of Argininosuccinate lyase from Synechococcus sp. (strain CC9902).